A 102-amino-acid polypeptide reads, in one-letter code: MAKQKIRIRLRAFDHKILDSSAAKIVETAIRTGATVSGPIPLPTEKSIYTILTAPNGEKDIREQFEMRTHKRLIDIVEPGSKTVEALMKLDLPAGVDIEIKL.

This sequence belongs to the universal ribosomal protein uS10 family. In terms of assembly, part of the 30S ribosomal subunit.

Functionally, involved in the binding of tRNA to the ribosomes. This is Small ribosomal subunit protein uS10 from Symbiobacterium thermophilum (strain DSM 24528 / JCM 14929 / IAM 14863 / T).